Reading from the N-terminus, the 743-residue chain is Serine/threonine-protein kinase GD17699 (743 aa).

The tract at residues 54 to 78 (NVQEDNSYNRDCDSPVSSSSEPEKE) is disordered. Doublecortin domains follow at residues 154–240 (LRIK…VEYN) and 309–392 (RIVT…AEDF). The 259-residue stretch at 473–731 (YTLGRIIGDG…SEDILDHPWT (259 aa)) folds into the Protein kinase domain. ATP contacts are provided by residues 479-487 (IGDGNFAIV) and Lys502. Residue Asp594 is the Proton acceptor of the active site.

This sequence belongs to the protein kinase superfamily. CAMK Ser/Thr protein kinase family. CaMK subfamily.

It carries out the reaction L-seryl-[protein] + ATP = O-phospho-L-seryl-[protein] + ADP + H(+). The catalysed reaction is L-threonyl-[protein] + ATP = O-phospho-L-threonyl-[protein] + ADP + H(+). The chain is Serine/threonine-protein kinase GD17699 from Drosophila simulans (Fruit fly).